The chain runs to 230 residues: MKLTWLGHSGFRLEIEQAVILIDPWLSGNPMFPEDRRDEAIQGATHILLTHGHGDHTGDTLSIARELKIPVVGIYDLINTWQTHQGIEGLGFNKGGTVDLGGAKVTMVNASHSSSFDGNEGPVYAGHESGYMIAGEGHVIYVSGDTDIMADMQWMGEYHQPDIGILCAGGHFTMDMDRAAWAARKYFDFKTVIPCHYKTFPLLAQDAEVLKAGLPGVQVIEPEVMQPIPL.

Belongs to the UPF0173 family.

The polypeptide is UPF0173 metal-dependent hydrolase Pden_0574 (Paracoccus denitrificans (strain Pd 1222)).